The chain runs to 256 residues: Deoxyribose-phosphate aldolase (256 aa).

Asp102 (proton donor/acceptor) is an active-site residue. The active-site Schiff-base intermediate with acetaldehyde is Lys165. The active-site Proton donor/acceptor is the Lys197.

This sequence belongs to the DeoC/FbaB aldolase family. DeoC type 2 subfamily.

The protein resides in the cytoplasm. The catalysed reaction is 2-deoxy-D-ribose 5-phosphate = D-glyceraldehyde 3-phosphate + acetaldehyde. Its pathway is carbohydrate degradation; 2-deoxy-D-ribose 1-phosphate degradation; D-glyceraldehyde 3-phosphate and acetaldehyde from 2-deoxy-alpha-D-ribose 1-phosphate: step 2/2. In terms of biological role, catalyzes a reversible aldol reaction between acetaldehyde and D-glyceraldehyde 3-phosphate to generate 2-deoxy-D-ribose 5-phosphate. The chain is Deoxyribose-phosphate aldolase from Shewanella sp. (strain ANA-3).